We begin with the raw amino-acid sequence, 521 residues long: Bifunctional purine biosynthesis protein PurH (521 aa).

An MGS-like domain is found at 1 to 145; that stretch reads MIKQALISVS…KNHKDVIVIC (145 aa).

Belongs to the PurH family.

It carries out the reaction (6R)-10-formyltetrahydrofolate + 5-amino-1-(5-phospho-beta-D-ribosyl)imidazole-4-carboxamide = 5-formamido-1-(5-phospho-D-ribosyl)imidazole-4-carboxamide + (6S)-5,6,7,8-tetrahydrofolate. The enzyme catalyses IMP + H2O = 5-formamido-1-(5-phospho-D-ribosyl)imidazole-4-carboxamide. The protein operates within purine metabolism; IMP biosynthesis via de novo pathway; 5-formamido-1-(5-phospho-D-ribosyl)imidazole-4-carboxamide from 5-amino-1-(5-phospho-D-ribosyl)imidazole-4-carboxamide (10-formyl THF route): step 1/1. It functions in the pathway purine metabolism; IMP biosynthesis via de novo pathway; IMP from 5-formamido-1-(5-phospho-D-ribosyl)imidazole-4-carboxamide: step 1/1. The polypeptide is Bifunctional purine biosynthesis protein PurH (Janthinobacterium sp. (strain Marseille) (Minibacterium massiliensis)).